The primary structure comprises 320 residues: Cytochrome f (320 aa).

Residues 1–35 (MQTINTFSWINQRITRSISVLLLVYIITRTSISSA) form the signal peptide. 4 residues coordinate heme: Tyr36, Cys56, Cys59, and His60. The chain crosses the membrane as a helical span at residues 286-306 (VQGLLFFLASVILAQIFLVLK).

It belongs to the cytochrome f family. The 4 large subunits of the cytochrome b6-f complex are cytochrome b6, subunit IV (17 kDa polypeptide, petD), cytochrome f and the Rieske protein, while the 4 small subunits are PetG, PetL, PetM and PetN. The complex functions as a dimer. Requires heme as cofactor.

Its subcellular location is the plastid thylakoid membrane. Its function is as follows. Component of the cytochrome b6-f complex, which mediates electron transfer between photosystem II (PSII) and photosystem I (PSI), cyclic electron flow around PSI, and state transitions. The chain is Cytochrome f from Cuscuta exaltata (Tall dodder).